Reading from the N-terminus, the 1555-residue chain is Probable serine/threonine-protein kinase DDB_G0276181 (1555 aa).

Disordered stretches follow at residues 1–54 (MTSV…NNSF), 138–208 (IIQQ…NSKL), 342–452 (KLKK…DSPF), 486–508 (TTTT…IKPL), and 781–850 (NNIN…NQNT). Composition is skewed to low complexity over residues 14–53 (NNSG…NNNS), 138–205 (IIQQ…NNNN), 359–378 (SNIA…KING), and 395–431 (NNSQ…SKKP). The region spanning 58–238 (QVLHTGYLTK…WIEMIKLAIS (181 aa)) is the PH domain. Over residues 437 to 452 (RNISTSDNGSGTDSPF) the composition is skewed to polar residues. 2 stretches are compositionally biased toward low complexity: residues 486-504 (TTTT…TNTN) and 781-832 (NNIN…NNNN). The span at 833–850 (GSGLLSSSPLITISNQNT) shows a compositional bias: polar residues. Residues 986–1309 (VVLHERLGTG…TIIHSISKMI (324 aa)) enclose the Protein kinase domain. 992–1000 (LGTGATGDI) serves as a coordination point for ATP. The interval 1012-1031 (RHISNQDSSGSNSSGSGSGH) is disordered. Lys1061 lines the ATP pocket. The Proton acceptor role is filled by Asp1156. Over residues 1340–1376 (VQNNNNNSNNNNNNNNNNNNNNSNSNLNNCNNSSPNL) the composition is skewed to low complexity. Disordered regions lie at residues 1340 to 1383 (VQNN…SANN) and 1457 to 1480 (KKSS…GSSR).

The protein belongs to the protein kinase superfamily. TKL Ser/Thr protein kinase family.

It carries out the reaction L-seryl-[protein] + ATP = O-phospho-L-seryl-[protein] + ADP + H(+). The enzyme catalyses L-threonyl-[protein] + ATP = O-phospho-L-threonyl-[protein] + ADP + H(+). In Dictyostelium discoideum (Social amoeba), this protein is Probable serine/threonine-protein kinase DDB_G0276181.